Reading from the N-terminus, the 337-residue chain is DNA replication regulator sld2 (337 aa).

Phosphothreonine; by cdc2 occurs at positions 60 and 74. The tract at residues 71–97 (KFQTPTKQRAETEANESPKAPRNDYLQ) is disordered. A Phosphoserine; by cdc2 modification is found at Ser-87. 2 positions are modified to phosphothreonine; by cdc2: Thr-99 and Thr-154. Ser-183 bears the Phosphoserine mark. The interval 258-302 (SMNLSKSHLEGLPEIDEDAENGIDDNEDTTASKDSSPFLDLQSER) is disordered. Positions 270–285 (PEIDEDAENGIDDNED) are enriched in acidic residues.

It belongs to the SLD2 family. Interacts with rad4. Post-translationally, phosphorylated by cdc2 at the onset of S-phase.

It is found in the cytoplasm. Its subcellular location is the nucleus. In terms of biological role, has a role in the initiation of DNA replication. Required at S-phase checkpoint. This Schizosaccharomyces pombe (strain 972 / ATCC 24843) (Fission yeast) protein is DNA replication regulator sld2 (drc1).